We begin with the raw amino-acid sequence, 404 residues long: Nicotinate phosphoribosyltransferase (404 aa).

The residue at position 224 (His-224) is a Phosphohistidine; by autocatalysis.

The protein belongs to the NAPRTase family. Transiently phosphorylated on a His residue during the reaction cycle. Phosphorylation strongly increases the affinity for substrates and increases the rate of nicotinate D-ribonucleotide production. Dephosphorylation regenerates the low-affinity form of the enzyme, leading to product release.

It catalyses the reaction nicotinate + 5-phospho-alpha-D-ribose 1-diphosphate + ATP + H2O = nicotinate beta-D-ribonucleotide + ADP + phosphate + diphosphate. Its pathway is cofactor biosynthesis; NAD(+) biosynthesis; nicotinate D-ribonucleotide from nicotinate: step 1/1. Catalyzes the synthesis of beta-nicotinate D-ribonucleotide from nicotinate and 5-phospho-D-ribose 1-phosphate at the expense of ATP. The chain is Nicotinate phosphoribosyltransferase from Photorhabdus laumondii subsp. laumondii (strain DSM 15139 / CIP 105565 / TT01) (Photorhabdus luminescens subsp. laumondii).